A 620-amino-acid chain; its full sequence is E3 ubiquitin-protein ligase DTX1 (620 aa).

WWE domains follow at residues 14-94 (GLGF…PVRR) and 95-171 (NFYD…RLRR). 3 disordered regions span residues 221–248 (SQRR…LAVR), 262–313 (PAAG…SIPP), and 361–391 (PPVS…KSKN). Composition is skewed to pro residues over residues 227–241 (PPAP…PGGP) and 268–280 (EPAP…PRSP). The SH3-binding signature appears at 230–233 (PPLP). Residues 291 to 307 (QNNLNRPGPQRTTSVSA) show a composition bias toward polar residues. The span at 379 to 389 (RKTKKKHLKKS) shows a compositional bias: basic residues. The segment at 411–472 (CTICMERLVT…DGSLQCPTCK (62 aa)) adopts an RING-type zinc-finger fold.

It belongs to the Deltex family. As to quaternary structure, homodimer. May form a heterodimer with other members of the Deltex family. Interacts with NOTCH1 via its N-terminal region and EIF3F, the interaction is required for NOTCH1 deubiquitination. Interacts with EP300. Forms a heterodimer with BBAP; the heterodimerization leading to an increase of in vitro ubiquitin ligase activity. Interacts with ITCH. Ubiquitinated; undergoes 'Lys-29'-linked polyubiquitination catalyzed by ITCH. As to expression, widely expressed. Strongly expressed in blood vessel. Also expressed in embryonic nervous system, pancreas, lung, adrenal gland, digestive tube and muscles. Expressed in MZB cells and developing B- and T-cells.

The protein resides in the cytoplasm. Its subcellular location is the nucleus. The enzyme catalyses S-ubiquitinyl-[E2 ubiquitin-conjugating enzyme]-L-cysteine + [acceptor protein]-L-lysine = [E2 ubiquitin-conjugating enzyme]-L-cysteine + N(6)-ubiquitinyl-[acceptor protein]-L-lysine.. It functions in the pathway protein modification; protein ubiquitination. In terms of biological role, functions as a ubiquitin ligase protein in vivo, mediating ubiquitination and promoting degradation of MEKK1, suggesting that it may regulate the Notch pathway via some ubiquitin ligase activity. Regulator of Notch signaling, a signaling pathway involved in cell-cell communications that regulates a broad spectrum of cell-fate determinations. Mainly acts as a positive regulator of Notch, but it also acts as a negative regulator, depending on the developmental and cell context. Mediates the antineural activity of Notch, possibly by inhibiting the transcriptional activation mediated by MATCH1. Involved in neurogenesis, lymphogenesis and myogenesis, and may also be involved in MZB (Marginal zone B) cell differentiation. Promotes B-cell development at the expense of T-cell development, suggesting that it can antagonize NOTCH1. This chain is E3 ubiquitin-protein ligase DTX1 (DTX1), found in Homo sapiens (Human).